Here is a 190-residue protein sequence, read N- to C-terminus: Endoribonuclease YbeY (190 aa).

A disordered region spans residues 1-25; that stretch reads MSQPRPGHRPDCNGADPDSNFASMT. Zn(2+)-binding residues include histidine 147, histidine 151, and histidine 157.

It belongs to the endoribonuclease YbeY family. It depends on Zn(2+) as a cofactor.

Its subcellular location is the cytoplasm. Its function is as follows. Single strand-specific metallo-endoribonuclease involved in late-stage 70S ribosome quality control and in maturation of the 3' terminus of the 16S rRNA. The protein is Endoribonuclease YbeY of Rhodopseudomonas palustris (strain ATCC BAA-98 / CGA009).